The following is a 267-amino-acid chain: Apolipoprotein A-I (267 aa).

A signal peptide spans 1–18 (MKAAVLTLAVLFLTGSQA). 2 tandem repeats follow at residues 68-89 (LKLLDNWDSVTSTFSKLREQLG) and 90-111 (PVTQEFWDNLEKETEGLRQEMS). A 10 X approximate tandem repeats region spans residues 68–267 (LKLLDNWDSV…EEYTKKLNTQ (200 aa)). A Methionine sulfoxide modification is found at methionine 110. Residues 112-122 (KDLEEVKAKVQ) form a 3; half-length repeat. Repeat copies occupy residues 123–144 (PYLDDFQKKWQEEMELYRQKVE), 145–166 (PLRAELQEGARQKLHELQEKLS), 167–188 (PLGEEMRDRARAHVDALRTHLA), 189–210 (PYSDELRQRLAARLEALKENGG), and 211–232 (ARLAEYHAKATEHLSTLSEKAK). Methionine 136 bears the Methionine sulfoxide mark. The stretch at 233–243 (PALEDLRQGLL) is one 9; half-length repeat. Residues 244–267 (PVLESFKVSFLSALEEYTKKLNTQ) form repeat 10.

The protein belongs to the apolipoprotein A1/A4/E family. In terms of assembly, homodimer. Interacts with APOA1BP and CLU. Component of a sperm activating protein complex (SPAP), consisting of APOA1, an immunoglobulin heavy chain, an immunoglobulin light chain and albumin. Interacts with NDRG1. Interacts with SCGB3A2. Interacts with NAXE and YJEFN3. Glycosylated. Post-translationally, palmitoylated. In terms of processing, phosphorylation sites are present in the extracellular medium. In terms of tissue distribution, major protein of plasma HDL, also found in chylomicrons.

The protein localises to the secreted. In terms of biological role, participates in the reverse transport of cholesterol from tissues to the liver for excretion by promoting cholesterol efflux from tissues and by acting as a cofactor for the lecithin cholesterol acyltransferase (LCAT). As part of the SPAP complex, activates spermatozoa motility. The sequence is that of Apolipoprotein A-I (APOA1) from Pan paniscus (Pygmy chimpanzee).